The primary structure comprises 419 residues: Sphingomyelin phosphodiesterase 2 (419 aa).

Glu-49 is a Mg(2+) binding site. Catalysis depends on His-272, which acts as the Proton acceptor. 2 helical membrane-spanning segments follow: residues 326-346 and 354-374; these read FSGY…VLAA and AIIL…VYLF.

Belongs to the neutral sphingomyelinase family. Mg(2+) serves as cofactor. Although widely expressed in all tissues examined, except the spleen, high enzymatic activity occurs only in the brain.

It is found in the cell membrane. It carries out the reaction a sphingomyelin + H2O = phosphocholine + an N-acylsphing-4-enine + H(+). The enzyme catalyses an N-(acyl)-sphingosylphosphocholine + H2O = an N-acyl-sphingoid base + phosphocholine + H(+). The catalysed reaction is 1-O-octadecyl-sn-glycero-3-phosphocholine + H2O = 1-O-octadecyl-sn-glycerol + phosphocholine + H(+). It catalyses the reaction 1-hexadecanoyl-sn-glycero-3-phosphocholine + H2O = 1-hexadecanoyl-sn-glycerol + phosphocholine + H(+). It carries out the reaction a sphingosylphosphocholine + H2O = a sphingoid base + phosphocholine + H(+). The enzyme catalyses 1-O-hexadecyl-sn-glycero-3-phosphocholine + H2O = 1-O-hexadecyl-sn-glycerol + phosphocholine + H(+). The protein operates within lipid metabolism; sphingolipid metabolism. With respect to regulation, activated by arachidonic acid. Its function is as follows. Catalyzes, at least in vitro, the hydrolysis of sphingomyelin to form ceramide and phosphocholine. Also hydrolyzes 1-O-alkyl-2-lyso-sn-glycero-3-phosphocholine (lyso-platelet-activating factor) in vivo. Also acts on 1-acyl-2-lyso-sn-glycero-3-phosphocholine (lyso-PC) and sphingosylphosphocholine. This Mus musculus (Mouse) protein is Sphingomyelin phosphodiesterase 2.